Consider the following 697-residue polypeptide: Colicin-D (697 aa).

The short motif at 17 to 24 (HSMVVWPS) is the TonB box element.

Belongs to the cloacin colicin family.

Colicins are polypeptide toxins produced by and active against E.coli and closely related bacteria. Functionally, colicin D inhibits protein synthesis. This chain is Colicin-D (cda), found in Escherichia coli.